The chain runs to 442 residues: tRNA(Ile)-lysidine synthase (442 aa).

Residue 30–35 (SGGLDS) participates in ATP binding.

It belongs to the tRNA(Ile)-lysidine synthase family.

The protein localises to the cytoplasm. It carries out the reaction cytidine(34) in tRNA(Ile2) + L-lysine + ATP = lysidine(34) in tRNA(Ile2) + AMP + diphosphate + H(+). Functionally, ligates lysine onto the cytidine present at position 34 of the AUA codon-specific tRNA(Ile) that contains the anticodon CAU, in an ATP-dependent manner. Cytidine is converted to lysidine, thus changing the amino acid specificity of the tRNA from methionine to isoleucine. The chain is tRNA(Ile)-lysidine synthase from Pseudomonas fluorescens (strain Pf0-1).